Here is a 298-residue protein sequence, read N- to C-terminus: Homoserine kinase (298 aa).

92-102 (PLARGLGSSAT) contributes to the ATP binding site.

This sequence belongs to the GHMP kinase family. Homoserine kinase subfamily.

The protein localises to the cytoplasm. It carries out the reaction L-homoserine + ATP = O-phospho-L-homoserine + ADP + H(+). It functions in the pathway amino-acid biosynthesis; L-threonine biosynthesis; L-threonine from L-aspartate: step 4/5. In terms of biological role, catalyzes the ATP-dependent phosphorylation of L-homoserine to L-homoserine phosphate. The sequence is that of Homoserine kinase (thrB) from Nostoc sp. (strain PCC 7120 / SAG 25.82 / UTEX 2576).